A 381-amino-acid chain; its full sequence is Beta-1,4-galactosyltransferase 5 (381 aa).

At 1-11 (MPTHLRFRRRS) the chain is on the cytoplasmic side. Residues 12–32 (FLGLLFLFSLSTSALYFIYSA) traverse the membrane as a helical; Signal-anchor for type II membrane protein segment. Residues 33-381 (PGIVNEYLFM…SRDLAPVADY (349 aa)) are Lumenal-facing. 3 N-linked (GlcNAc...) asparagine glycosylation sites follow: asparagine 73, asparagine 82, and asparagine 120. A disulfide bridge connects residues cysteine 106 and cysteine 151. UDP-alpha-D-galactose contacts are provided by residues 162 to 166 (PFRNR), 201 to 203 (FNR), 228 to 229 (VD), tyrosine 257, and tryptophan 289. Cysteine 222 and cysteine 241 form a disulfide bridge. Aspartate 229 serves as a coordination point for Mn(2+). 291-294 (GEDD) contacts N-acetyl-D-glucosamine. Residue histidine 322 coordinates Mn(2+). UDP-alpha-D-galactose is bound at residue 322 to 323 (HH). Residue arginine 333 coordinates N-acetyl-D-glucosamine. A glycan (N-linked (GlcNAc...) asparagine) is linked at asparagine 366.

It belongs to the glycosyltransferase 7 family. Mn(2+) serves as cofactor.

The protein resides in the golgi apparatus. It localises to the golgi stack membrane. It carries out the reaction a beta-D-glucosyl-(1&lt;-&gt;1')-N-acylsphing-4-enine + UDP-alpha-D-galactose = a beta-D-Gal-(1-&gt;4)-beta-D-Glc-(1&lt;-&gt;1)-Cer(d18:1(4E)) + UDP + H(+). It functions in the pathway protein modification; protein glycosylation. The protein operates within sphingolipid metabolism. Its function is as follows. Catalyzes the synthesis of lactosylceramide (LacCer) via the transfer of galactose from UDP-galactose to glucosylceramide (GlcCer). Required for proper patterning of the dorsoventral axis during embryogenesis through the regulation of BMP signaling. Plays a role in proteoglycan glycosylation that is required for BMP-dependent specification of the dorsoventral axis. This chain is Beta-1,4-galactosyltransferase 5 (b4galt5), found in Danio rerio (Zebrafish).